The following is an 808-amino-acid chain: MLMTKPPVPQLNLTAVHEAAERAARAIPPLWPLESSVAVNPFLGQIGEPLAVAAARLRRVAGAAVTMPRAWYAERIASGELSDVDLAAAIDAATPTTRPLTIAELKRAAQMEIAPPQALPTVADLASAVSGFDWTGFVAERISAWASGYFDRGQALWAAPKGPNAYAAWRLTATHDLTPEIFSITGFAADVAAAPESADAALIRAVEQLGLSEAASESYFHRLLVGLGGWAQLARYRLWQAELSGSTDTTVTDLLAVRAVWDSALLRKYQPQIAAEWTDAINGYAQPLQPTEDDQINAILQDAVERAAQRKLQTVLTASSQPKPEDRPALQMAFCIDVRSEPFRRALESLDPRIRTLGFGGFFGLPIAHRRFASDVVEARLPVLLPPRVTTSCSGHTHAHEANDRAKRVAARAKRAWGRFKLAAISSFAFVESMGPVYVAKLLSDGLRPGTRTTNTDPVPQFDPPLALGARVDTAEAVLRAMSLTGPFAPLVLIAGHGASVVNNPHASALHCGACGGFPGDVNARLLAGLLNDPEVRTALAGRDIAIPADTLFVGALHDTTTDAVTLYDADHHSPAHAAALAQTRDWLATAGALTRSERALRLPRAATGGAIARRARDWAEVRPEWALAGCRAFIAAPRSHTSGRDLQGQAFLHDYDWRKDTDFSVLELILTAPVVVASWISLQYYGSTVAPETFGAGNKLLHNVTGGIGVVEGNGGLLRSGLPWQSVHDGERLVHQPLRLSVLIEAPHEAISTILDRYPEVRALFDNGWMHLLALDDNGRMHWRYGGDGGWERADNPPANQRVASFE.

Cysteine 335, aspartate 337, histidine 497, and cysteine 512 together coordinate Zn(2+).

The protein belongs to the inorganic carbon transporter (TC 9.A.2) DabA family. As to quaternary structure, forms a complex with DabB. Zn(2+) is required as a cofactor.

It localises to the cell inner membrane. Its function is as follows. Part of an energy-coupled inorganic carbon pump. The polypeptide is Probable inorganic carbon transporter subunit DabA (Rhodopseudomonas palustris (strain TIE-1)).